The following is a 155-amino-acid chain: D-aminoacyl-tRNA deacylase (155 aa).

The short motif at 137 to 138 (GP) is the Gly-cisPro motif, important for rejection of L-amino acids element.

It belongs to the DTD family. As to quaternary structure, homodimer.

The protein localises to the cytoplasm. It carries out the reaction glycyl-tRNA(Ala) + H2O = tRNA(Ala) + glycine + H(+). The catalysed reaction is a D-aminoacyl-tRNA + H2O = a tRNA + a D-alpha-amino acid + H(+). Functionally, an aminoacyl-tRNA editing enzyme that deacylates mischarged D-aminoacyl-tRNAs. Also deacylates mischarged glycyl-tRNA(Ala), protecting cells against glycine mischarging by AlaRS. Acts via tRNA-based rather than protein-based catalysis; rejects L-amino acids rather than detecting D-amino acids in the active site. By recycling D-aminoacyl-tRNA to D-amino acids and free tRNA molecules, this enzyme counteracts the toxicity associated with the formation of D-aminoacyl-tRNA entities in vivo and helps enforce protein L-homochirality. This is D-aminoacyl-tRNA deacylase from Geotalea uraniireducens (strain Rf4) (Geobacter uraniireducens).